The chain runs to 107 residues: Putative pterin-4-alpha-carbinolamine dehydratase (107 aa).

Belongs to the pterin-4-alpha-carbinolamine dehydratase family.

The catalysed reaction is (4aS,6R)-4a-hydroxy-L-erythro-5,6,7,8-tetrahydrobiopterin = (6R)-L-erythro-6,7-dihydrobiopterin + H2O. This chain is Putative pterin-4-alpha-carbinolamine dehydratase, found in Rubrobacter xylanophilus (strain DSM 9941 / JCM 11954 / NBRC 16129 / PRD-1).